Reading from the N-terminus, the 409-residue chain is Putative lipoate-protein ligase A (409 aa).

Residues 146-330 form the BPL/LPL catalytic domain; that stretch reads GPDNCRLVFY…RFQKTFKVDG (185 aa). ATP contacts are provided by residues R188, 193 to 196, and K249; that span reads GTVL. K249 is a binding site for (R)-lipoate.

This sequence belongs to the LplA family. Monomer.

It catalyses the reaction L-lysyl-[lipoyl-carrier protein] + (R)-lipoate + ATP = N(6)-[(R)-lipoyl]-L-lysyl-[lipoyl-carrier protein] + AMP + diphosphate + H(+). The protein operates within protein modification; protein lipoylation via exogenous pathway; protein N(6)-(lipoyl)lysine from lipoate: step 1/2. Its pathway is protein modification; protein lipoylation via exogenous pathway; protein N(6)-(lipoyl)lysine from lipoate: step 2/2. Functionally, catalyzes both the ATP-dependent activation of exogenously supplied lipoate to lipoyl-AMP and the transfer of the activated lipoyl onto the lipoyl domains of lipoate-dependent enzymes. In Saccharomyces cerevisiae (strain YJM789) (Baker's yeast), this protein is Putative lipoate-protein ligase A (AIM22).